The chain runs to 219 residues: Phosphate-specific transport system accessory protein PhoU homolog (219 aa).

Belongs to the PhoU family. In terms of assembly, homodimer.

It is found in the cytoplasm. Functionally, plays a role in the regulation of phosphate uptake. Encoded together with proteins of the phosphate-specific transport (Pst) system in the polycistronic pstSCAB-phoU operon. The sequence is that of Phosphate-specific transport system accessory protein PhoU homolog from Clostridium acetobutylicum (strain ATCC 824 / DSM 792 / JCM 1419 / IAM 19013 / LMG 5710 / NBRC 13948 / NRRL B-527 / VKM B-1787 / 2291 / W).